The primary structure comprises 536 residues: Lariat debranching enzyme (536 aa).

4 residues coordinate a divalent metal cation: C8, H10, D39, and N84. The segment at 124 to 154 (SGIFKSHDYRKGHFECPPYNQQTIRSAYHVR) is lariat recognition loop. Residues H174, H226, and H228 each contribute to the a divalent metal cation site. Residues 388–536 (EEGSVRGEYE…YAAEDEDEAK (149 aa)) form a disordered region. Over residues 414-426 (EYNTDNSGLSSIN) the composition is skewed to polar residues. Acidic residues predominate over residues 430–441 (IMLDDEGGDEDL). Positions 484–504 (ELEKSGVNKQVEEKSLNERPL) are enriched in basic and acidic residues.

The protein belongs to the lariat debranching enzyme family. Requires Fe(2+) as cofactor. Zn(2+) is required as a cofactor. Mn(2+) serves as cofactor.

It localises to the nucleus. With respect to regulation, active in presence of diverse metals including Fe(2+), Zn(2+), Mn(2+). Also activated by Ca(2+). Binds two metal cations in two adjacent alpha and beta metal-binding pockets. Cleaves the 2'-5' phosphodiester linkage at the branch point of excised lariat intron RNA and converts them into linear molecules that can be subsequently degraded, thereby facilitating ribonucleotide turnover. Linked to its role in pre-mRNA processing mechanism, may also participate in retrovirus replication and have an antiviral cell-intrinsic defense function. This chain is Lariat debranching enzyme (DBR1), found in Gallus gallus (Chicken).